A 338-amino-acid polypeptide reads, in one-letter code: Ketol-acid reductoisomerase (NADP(+)) (338 aa).

Residues Met-1 to Thr-181 form the KARI N-terminal Rossmann domain. NADP(+)-binding positions include Tyr-24–Gln-27, Arg-47, Ser-50, Ser-52, and Asp-82–Gln-85. The active site involves His-107. Gly-133 contributes to the NADP(+) binding site. The KARI C-terminal knotted domain maps to Thr-182–Ile-327. Asp-190, Glu-194, Glu-226, and Glu-230 together coordinate Mg(2+). Ser-251 is a substrate binding site.

This sequence belongs to the ketol-acid reductoisomerase family. Requires Mg(2+) as cofactor.

It catalyses the reaction (2R)-2,3-dihydroxy-3-methylbutanoate + NADP(+) = (2S)-2-acetolactate + NADPH + H(+). The catalysed reaction is (2R,3R)-2,3-dihydroxy-3-methylpentanoate + NADP(+) = (S)-2-ethyl-2-hydroxy-3-oxobutanoate + NADPH + H(+). The protein operates within amino-acid biosynthesis; L-isoleucine biosynthesis; L-isoleucine from 2-oxobutanoate: step 2/4. It functions in the pathway amino-acid biosynthesis; L-valine biosynthesis; L-valine from pyruvate: step 2/4. Its function is as follows. Involved in the biosynthesis of branched-chain amino acids (BCAA). Catalyzes an alkyl-migration followed by a ketol-acid reduction of (S)-2-acetolactate (S2AL) to yield (R)-2,3-dihydroxy-isovalerate. In the isomerase reaction, S2AL is rearranged via a Mg-dependent methyl migration to produce 3-hydroxy-3-methyl-2-ketobutyrate (HMKB). In the reductase reaction, this 2-ketoacid undergoes a metal-dependent reduction by NADPH to yield (R)-2,3-dihydroxy-isovalerate. The chain is Ketol-acid reductoisomerase (NADP(+)) from Stutzerimonas stutzeri (strain A1501) (Pseudomonas stutzeri).